A 142-amino-acid polypeptide reads, in one-letter code: Ribosome-binding factor A (142 aa).

A disordered region spans residues 118-142 (DKNGDAEVDDTQVDDEPSVDSEKGE). Acidic residues predominate over residues 123 to 136 (AEVDDTQVDDEPSV).

Belongs to the RbfA family. In terms of assembly, monomer. Binds 30S ribosomal subunits, but not 50S ribosomal subunits or 70S ribosomes.

The protein resides in the cytoplasm. Functionally, one of several proteins that assist in the late maturation steps of the functional core of the 30S ribosomal subunit. Associates with free 30S ribosomal subunits (but not with 30S subunits that are part of 70S ribosomes or polysomes). Required for efficient processing of 16S rRNA. May interact with the 5'-terminal helix region of 16S rRNA. The chain is Ribosome-binding factor A from Colwellia psychrerythraea (strain 34H / ATCC BAA-681) (Vibrio psychroerythus).